A 1004-amino-acid polypeptide reads, in one-letter code: 26S proteasome non-ATPase regulatory subunit 1 homolog A (1004 aa).

A2 bears the N-acetylalanine mark. A Glycyl lysine isopeptide (Lys-Gly) (interchain with G-Cter in ubiquitin) cross-link involves residue K166. 10 PC repeats span residues 412–447 (SATA…GGSP), 452–485 (GALY…EVIQ), 487–521 (GACL…VAGE), 522–555 (AAGI…EKII), 557–590 (GLAL…IIRY), 591–626 (GGMY…DVRR), 627–659 (TAVL…PHVR), 661–695 (GAAL…FVRQ), 696–736 (GALI…DTMS), and 739–771 (GAIL…TAVI). Disordered stretches follow at residues 858 to 905 (EQKA…KKAP) and 959 to 1004 (VLSL…EYAS). S896 bears the Phosphoserine mark. Residues 965 to 987 (APTSTASPATGTAAAAQGTPASA) show a composition bias toward low complexity.

It belongs to the proteasome subunit S1 family. In terms of assembly, component of the 19S regulatory particle (RP/PA700) base subcomplex of the 26S proteasome. The 26S proteasome is composed of a core protease (CP), known as the 20S proteasome, capped at one or both ends by the 19S regulatory particle (RP/PA700). The RP/PA700 complex is composed of at least 17 different subunits in two subcomplexes, the base and the lid, which form the portions proximal and distal to the 20S proteolytic core, respectively. In terms of tissue distribution, ubiquitous with highest expression in flowers.

Functionally, acts as a regulatory subunit of the 26 proteasome which is involved in the ATP-dependent degradation of ubiquitinated proteins. In Arabidopsis thaliana (Mouse-ear cress), this protein is 26S proteasome non-ATPase regulatory subunit 1 homolog A (RPN2A).